A 311-amino-acid chain; its full sequence is MKVTVLGAAGGIGQALALLLKTQLPAGSELSLYDIAPVTPGVAVDLSHIPTSVKIAGFSGEDATPALKGADVVLISAGVARKPGMDRSDLFNVNAGIVRNLIEQVAATCPKALIGIITNPVNTTVAIAAEVLKKAGVYDKNRLFGITTLDIIRANAFVAELKGKQPEEVNVPVIGGHSGVTILPLLSQVPGVSFNEQETASLTKRIQNAGTEVVEAKAGGGSATLSMGQAAARFGLALVRALKGESNVIECAYVEGEGEYARFFSQPLLLGKNGIVERRPVGELSAFEQHALSSMLDTLKKDITQGEEFVK.

NAD(+) contacts are provided by residues 7–13 (GAAGGIG) and Asp-34. Substrate-binding residues include Arg-81 and Arg-87. NAD(+)-binding positions include Asn-94 and 117–119 (ITN). Residues Asn-119 and Arg-153 each contribute to the substrate site. His-177 serves as the catalytic Proton acceptor. NAD(+) is bound at residue Met-227.

It belongs to the LDH/MDH superfamily. MDH type 1 family. As to quaternary structure, homodimer.

It catalyses the reaction (S)-malate + NAD(+) = oxaloacetate + NADH + H(+). In terms of biological role, catalyzes the reversible oxidation of malate to oxaloacetate. The chain is Malate dehydrogenase from Erwinia tasmaniensis (strain DSM 17950 / CFBP 7177 / CIP 109463 / NCPPB 4357 / Et1/99).